The primary structure comprises 203 residues: Small ribosomal subunit protein uS4 (203 aa).

Positions 93–153 (RRFDNVVFRA…QKSQNLDAVA (61 aa)) constitute an S4 RNA-binding domain.

This sequence belongs to the universal ribosomal protein uS4 family. As to quaternary structure, part of the 30S ribosomal subunit. Contacts protein S5. The interaction surface between S4 and S5 is involved in control of translational fidelity.

Its function is as follows. One of the primary rRNA binding proteins, it binds directly to 16S rRNA where it nucleates assembly of the body of the 30S subunit. With S5 and S12 plays an important role in translational accuracy. In Chlorobium phaeobacteroides (strain BS1), this protein is Small ribosomal subunit protein uS4.